The following is a 1071-amino-acid chain: Carbamoyl phosphate synthase large chain (1071 aa).

The interval 1–403 (MPKRTDLKSI…SFQKALRGLE (403 aa)) is carboxyphosphate synthetic domain. One can recognise an ATP-grasp 1 domain in the interval 133-328 (KEAMEKIGLS…IAKVAANWAV (196 aa)). Residues R169, G175, G176, Q208, V210, E215, G241, V242, H243, Q285, and E299 each contribute to the ATP site. Mg(2+) contacts are provided by Q285, E299, and N301. Positions 285, 299, and 301 each coordinate Mn(2+). The tract at residues 404–548 (TGLCGFNPAR…YSTYEEECES (145 aa)) is oligomerization domain. The carbamoyl phosphate synthetic domain stretch occupies residues 549–930 (RPSDRKKVMI…AYYKAQLGAG (382 aa)). The 192-residue stretch at 673–864 (QKVLNDLGLR…LAKVGARCMA (192 aa)) folds into the ATP-grasp 2 domain. R709, F748, L750, E755, G780, I781, H782, S783, Q823, and E835 together coordinate ATP. The Mg(2+) site is built by Q823, E835, and N837. Mn(2+) is bound by residues Q823, E835, and N837. An MGS-like domain is found at 931-1071 (ERLNPTGKIF…ELHGRLKNRN (141 aa)). An allosteric domain region spans residues 931 to 1071 (ERLNPTGKIF…ELHGRLKNRN (141 aa)).

It belongs to the CarB family. As to quaternary structure, composed of two chains; the small (or glutamine) chain promotes the hydrolysis of glutamine to ammonia, which is used by the large (or ammonia) chain to synthesize carbamoyl phosphate. Tetramer of heterodimers (alpha,beta)4. Requires Mg(2+) as cofactor. The cofactor is Mn(2+).

It carries out the reaction hydrogencarbonate + L-glutamine + 2 ATP + H2O = carbamoyl phosphate + L-glutamate + 2 ADP + phosphate + 2 H(+). The catalysed reaction is hydrogencarbonate + NH4(+) + 2 ATP = carbamoyl phosphate + 2 ADP + phosphate + 2 H(+). It participates in amino-acid biosynthesis; L-arginine biosynthesis; carbamoyl phosphate from bicarbonate: step 1/1. It functions in the pathway pyrimidine metabolism; UMP biosynthesis via de novo pathway; (S)-dihydroorotate from bicarbonate: step 1/3. Large subunit of the glutamine-dependent carbamoyl phosphate synthetase (CPSase). CPSase catalyzes the formation of carbamoyl phosphate from the ammonia moiety of glutamine, carbonate, and phosphate donated by ATP, constituting the first step of 2 biosynthetic pathways, one leading to arginine and/or urea and the other to pyrimidine nucleotides. The large subunit (synthetase) binds the substrates ammonia (free or transferred from glutamine from the small subunit), hydrogencarbonate and ATP and carries out an ATP-coupled ligase reaction, activating hydrogencarbonate by forming carboxy phosphate which reacts with ammonia to form carbamoyl phosphate. This Neisseria gonorrhoeae protein is Carbamoyl phosphate synthase large chain.